Reading from the N-terminus, the 345-residue chain is Phenylalanine--tRNA ligase alpha subunit (345 aa).

Position 259 (Glu259) interacts with Mg(2+).

This sequence belongs to the class-II aminoacyl-tRNA synthetase family. Phe-tRNA synthetase alpha subunit type 1 subfamily. As to quaternary structure, tetramer of two alpha and two beta subunits. Requires Mg(2+) as cofactor.

The protein resides in the cytoplasm. It catalyses the reaction tRNA(Phe) + L-phenylalanine + ATP = L-phenylalanyl-tRNA(Phe) + AMP + diphosphate + H(+). The protein is Phenylalanine--tRNA ligase alpha subunit of Lactococcus lactis subsp. cremoris (strain MG1363).